A 261-amino-acid polypeptide reads, in one-letter code: Undecaprenyl-diphosphatase (261 aa).

7 helical membrane-spanning segments follow: residues 38–58 (RSDF…TFVF), 75–95 (RDYV…GLAV), 106–126 (IQPI…AESV), 136–156 (VTWS…VFPG), 181–201 (FSFL…CFEL), 217–237 (VAFV…LGYI), and 241–261 (SFAP…TWLT).

This sequence belongs to the UppP family.

It is found in the cell inner membrane. It carries out the reaction di-trans,octa-cis-undecaprenyl diphosphate + H2O = di-trans,octa-cis-undecaprenyl phosphate + phosphate + H(+). Its function is as follows. Catalyzes the dephosphorylation of undecaprenyl diphosphate (UPP). Confers resistance to bacitracin. The protein is Undecaprenyl-diphosphatase of Xylella fastidiosa (strain 9a5c).